A 52-amino-acid chain; its full sequence is Large ribosomal subunit protein bL33 (52 aa).

The protein belongs to the bacterial ribosomal protein bL33 family.

The chain is Large ribosomal subunit protein bL33 from Anaeromyxobacter dehalogenans (strain 2CP-C).